The primary structure comprises 103 residues: RNA-binding protein YlxQ (103 aa).

This sequence belongs to the eukaryotic ribosomal protein eL8 family.

In terms of biological role, RNA-binding protein that recognizes the K-turn motif present in ribosomal RNA, but also in box C/D and box C'/D' sRNAs. This chain is RNA-binding protein YlxQ, found in Enterococcus faecium (Streptococcus faecium).